The sequence spans 374 residues: tRNA-specific 2-thiouridylase MnmA (374 aa).

Residues 8-15 (GLSGGVDS) and Met34 each bind ATP. Residues 104–106 (NPD) are interaction with target base in tRNA. Cys109 acts as the Nucleophile in catalysis. Cys109 and Cys208 are oxidised to a cystine. Gly134 provides a ligand contact to ATP. The tract at residues 158–160 (KDQ) is interaction with tRNA. Cys208 (cysteine persulfide intermediate) is an active-site residue. An interaction with tRNA region spans residues 321–322 (RY).

The protein belongs to the MnmA/TRMU family.

The protein resides in the cytoplasm. The catalysed reaction is S-sulfanyl-L-cysteinyl-[protein] + uridine(34) in tRNA + AH2 + ATP = 2-thiouridine(34) in tRNA + L-cysteinyl-[protein] + A + AMP + diphosphate + H(+). Functionally, catalyzes the 2-thiolation of uridine at the wobble position (U34) of tRNA, leading to the formation of s(2)U34. The chain is tRNA-specific 2-thiouridylase MnmA from Mesoplasma florum (strain ATCC 33453 / NBRC 100688 / NCTC 11704 / L1) (Acholeplasma florum).